The following is an 846-amino-acid chain: Translation initiation factor IF-2 (846 aa).

Positions 198-219 are disordered; the sequence is YKREEEEKKSKAKKAGGKGFKK. Residues 207 to 219 are compositionally biased toward basic residues; that stretch reads SKAKKAGGKGFKK. One can recognise a tr-type G domain in the interval 345-512; it reads SRAPVVTIMG…AVLLQSEVLE (168 aa). The tract at residues 354 to 361 is G1; sequence GHVDHGKT. GTP is bound at residue 354–361; sequence GHVDHGKT. Positions 379 to 383 are G2; sequence GITQH. The interval 400–403 is G3; the sequence is DTPG. Residues 400-404 and 454-457 each bind GTP; these read DTPGH and NKID. The tract at residues 454 to 457 is G4; sequence NKID. Residues 490-492 are G5; the sequence is SAK.

It belongs to the TRAFAC class translation factor GTPase superfamily. Classic translation factor GTPase family. IF-2 subfamily.

It localises to the cytoplasm. Its function is as follows. One of the essential components for the initiation of protein synthesis. Protects formylmethionyl-tRNA from spontaneous hydrolysis and promotes its binding to the 30S ribosomal subunits. Also involved in the hydrolysis of GTP during the formation of the 70S ribosomal complex. The protein is Translation initiation factor IF-2 of Francisella tularensis subsp. holarctica (strain OSU18).